We begin with the raw amino-acid sequence, 146 residues long: VHWTAEEKSAITSIWNKVDVPAVGSEALSRLLIVYPWTQRFFTSFGNLSNAAAIQSNAQVKAHGKKVFTAFGDAVKNPEAVKETFAKLSELHCDKLHVDPINFKLLGQILITVLAAHFGKEFTPHVQASYQKLVSVVAHALAHRYH.

The Globin domain maps to 2-146 (HWTAEEKSAI…VAHALAHRYH (145 aa)). Heme b is bound by residues His-63 and His-92.

Belongs to the globin family. In terms of assembly, heterotetramer of two alpha chains and two beta chains. In terms of tissue distribution, red blood cells.

Involved in oxygen transport from the lung to the various peripheral tissues. This is Hemoglobin subunit beta-1 from Drymarchon melanurus erebennus (Texas indigo snake).